A 358-amino-acid polypeptide reads, in one-letter code: Glutamine synthetase (358 aa).

Positions 25–104 (VQAEYIWIDA…VLCECYDNDG (80 aa)) constitute a GS beta-grasp domain. In terms of domain architecture, GS catalytic spans 111–358 (YRAHCKKVMD…ILVETTVLNN (248 aa)).

This sequence belongs to the glutamine synthetase family. In terms of assembly, homooctamer.

It localises to the cytoplasm. It catalyses the reaction L-glutamate + NH4(+) + ATP = L-glutamine + ADP + phosphate + H(+). This chain is Glutamine synthetase (GLN1), found in Cryptococcus neoformans var. neoformans serotype D (strain B-3501A) (Filobasidiella neoformans).